Consider the following 195-residue polypeptide: ATP-dependent Clp protease proteolytic subunit (195 aa).

The Nucleophile role is filled by Ser99. His124 is an active-site residue.

This sequence belongs to the peptidase S14 family. As to quaternary structure, fourteen ClpP subunits assemble into 2 heptameric rings which stack back to back to give a disk-like structure with a central cavity, resembling the structure of eukaryotic proteasomes.

The protein localises to the cytoplasm. The catalysed reaction is Hydrolysis of proteins to small peptides in the presence of ATP and magnesium. alpha-casein is the usual test substrate. In the absence of ATP, only oligopeptides shorter than five residues are hydrolyzed (such as succinyl-Leu-Tyr-|-NHMec, and Leu-Tyr-Leu-|-Tyr-Trp, in which cleavage of the -Tyr-|-Leu- and -Tyr-|-Trp bonds also occurs).. Its function is as follows. Cleaves peptides in various proteins in a process that requires ATP hydrolysis. Has a chymotrypsin-like activity. Plays a major role in the degradation of misfolded proteins. In Coxiella burnetii (strain RSA 331 / Henzerling II), this protein is ATP-dependent Clp protease proteolytic subunit.